The primary structure comprises 291 residues: ATP synthase subunit a (291 aa).

Transmembrane regions (helical) follow at residues 48-68 (IHLDSMGWSIGLGIIFCLVFW), 108-128 (IAPLALTIFVWIFLMNLMDLI), 161-181 (DPNITLGMSLSVFVLILFYSI), 241-261 (LIFILIALLPFWIQWALSVPW), and 262-282 (AIFHILVITLQAFIFMMLTIV).

The protein belongs to the ATPase A chain family. As to quaternary structure, F-type ATPases have 2 components, CF(1) - the catalytic core - and CF(0) - the membrane proton channel. CF(1) has five subunits: alpha(3), beta(3), gamma(1), delta(1), epsilon(1). CF(0) has three main subunits: a(1), b(2) and c(9-12). The alpha and beta chains form an alternating ring which encloses part of the gamma chain. CF(1) is attached to CF(0) by a central stalk formed by the gamma and epsilon chains, while a peripheral stalk is formed by the delta and b chains.

It is found in the cell inner membrane. Its function is as follows. Key component of the proton channel; it plays a direct role in the translocation of protons across the membrane. The polypeptide is ATP synthase subunit a (Acinetobacter baylyi (strain ATCC 33305 / BD413 / ADP1)).